The sequence spans 418 residues: Tyrosine--tRNA ligase (418 aa).

L-tyrosine is bound at residue Tyr-38. The 'HIGH' region signature appears at 43 to 52 (CTARSLHIGS). L-tyrosine contacts are provided by Tyr-175 and Gln-179. The short motif at 235–239 (KMGKT) is the 'KMSKS' region element. Lys-238 is a binding site for ATP. In terms of domain architecture, S4 RNA-binding spans 348–413 (LSVVKLLQVS…CGKKRHLKVV (66 aa)).

This sequence belongs to the class-I aminoacyl-tRNA synthetase family. TyrS type 1 subfamily. As to quaternary structure, homodimer.

Its subcellular location is the cytoplasm. The enzyme catalyses tRNA(Tyr) + L-tyrosine + ATP = L-tyrosyl-tRNA(Tyr) + AMP + diphosphate + H(+). Its function is as follows. Catalyzes the attachment of tyrosine to tRNA(Tyr) in a two-step reaction: tyrosine is first activated by ATP to form Tyr-AMP and then transferred to the acceptor end of tRNA(Tyr). The sequence is that of Tyrosine--tRNA ligase from Ehrlichia ruminantium (strain Gardel).